Here is a 151-residue protein sequence, read N- to C-terminus: MIQSINHVTYSVSDISKSINFYKDILKAKILVESDKTAYFILGGLWLALNEEKDIPRNEIRYSYTHMAFTIEESEFEEWYQWLNDNNVNILEGRTRDVRDKKSIYFTDPDGHKFELHTGTLQDRLDYYKEEKPHMKFYEWDEVDKTDNNRE.

The 116-residue stretch at 4 to 119 (SINHVTYSVS…DGHKFELHTG (116 aa)) folds into the VOC domain. 3 residues coordinate Mg(2+): histidine 7, histidine 66, and glutamate 115. Glutamate 115 functions as the Proton donor/acceptor in the catalytic mechanism.

This sequence belongs to the fosfomycin resistance protein family. FosB subfamily. In terms of assembly, homodimer. The cofactor is Mg(2+).

The protein localises to the cytoplasm. Metallothiol transferase which confers resistance to fosfomycin by catalyzing the addition of a thiol cofactor to fosfomycin. L-cysteine is probably the physiological thiol donor. This chain is Metallothiol transferase FosB, found in Staphylococcus saprophyticus subsp. saprophyticus (strain ATCC 15305 / DSM 20229 / NCIMB 8711 / NCTC 7292 / S-41).